A 1017-amino-acid polypeptide reads, in one-letter code: Type VI secretion system spike protein VgrG3 (1017 aa).

Residue Asp842 is part of the active site.

Belongs to the VgrG protein family. As to quaternary structure, interacts with TsiV3. Interacts with TseL.

It is found in the secreted. In terms of biological role, part of the type VI secretion system specialized secretion system, which delivers several virulence factors in both prokaryotic and eukaryotic cells during infection. Forms the spike at the tip of the elongating tube formed by haemolysin co-regulated protein Hcp. Allows the delivery of the TseL antibacterial toxin to target cells where it exerts its toxicity. Additionally, acts directly as an effector and targets the cell wall peptidoglycan layer of prey cells for degradation via its C-terminus. Toxicity is counteracted by a cognate immunity protein TsiV3. The chain is Type VI secretion system spike protein VgrG3 from Vibrio cholerae serotype O1 (strain ATCC 39315 / El Tor Inaba N16961).